The chain runs to 579 residues: Methionine--tRNA ligase (579 aa).

The short motif at proline 14–asparagine 24 is the 'HIGH' region element. The Zn(2+) site is built by cysteine 146, cysteine 149, cysteine 159, and cysteine 162. A 'KMSKS' region motif is present at residues lysine 346–serine 350. Threonine 349 contacts ATP.

This sequence belongs to the class-I aminoacyl-tRNA synthetase family. MetG type 1 subfamily. In terms of assembly, monomer. It depends on Zn(2+) as a cofactor.

The protein localises to the cytoplasm. The enzyme catalyses tRNA(Met) + L-methionine + ATP = L-methionyl-tRNA(Met) + AMP + diphosphate. Its function is as follows. Is required not only for elongation of protein synthesis but also for the initiation of all mRNA translation through initiator tRNA(fMet) aminoacylation. The chain is Methionine--tRNA ligase from Hyphomonas neptunium (strain ATCC 15444).